Reading from the N-terminus, the 205-residue chain is MSKRETTKYKIDRRMGENIWGRPKSPVNRRDYGPGQHGQRRKGKLSDYGVQLRAKQKLKGFYGDISEKQFRKTYEEAARRRGDTGENLIGLLESRLDAVIYRAKFVPTIFASRQFINHGHVNVNGRRTNIQSYRCKPGDVIEIREKSKQLVLVLESVQLVERDVPEYIEADHNQMKATFTRIPAFADVPYAVQMEPNLVVEFYSR.

Positions 1–16 (MSKRETTKYKIDRRMG) are enriched in basic and acidic residues. The tract at residues 1 to 46 (MSKRETTKYKIDRRMGENIWGRPKSPVNRRDYGPGQHGQRRKGKLS) is disordered. Positions 94–157 (SRLDAVIYRA…KQLVLVLESV (64 aa)) constitute an S4 RNA-binding domain.

Belongs to the universal ribosomal protein uS4 family. Part of the 30S ribosomal subunit. Contacts protein S5. The interaction surface between S4 and S5 is involved in control of translational fidelity.

Its function is as follows. One of the primary rRNA binding proteins, it binds directly to 16S rRNA where it nucleates assembly of the body of the 30S subunit. In terms of biological role, with S5 and S12 plays an important role in translational accuracy. This chain is Small ribosomal subunit protein uS4, found in Bartonella henselae (strain ATCC 49882 / DSM 28221 / CCUG 30454 / Houston 1) (Rochalimaea henselae).